The following is a 1024-amino-acid chain: Beta-galactosidase (1024 aa).

2 residues coordinate substrate: asparagine 103 and aspartate 202. Na(+) is bound at residue aspartate 202. Residues glutamate 417, histidine 419, and glutamate 462 each contribute to the Mg(2+) site. Residues glutamate 462 and 538-541 (EYAH) contribute to the substrate site. Catalysis depends on glutamate 462, which acts as the Proton donor. Residue glutamate 538 is the Nucleophile of the active site. A Mg(2+)-binding site is contributed by asparagine 598. Na(+) contacts are provided by phenylalanine 602 and asparagine 605. Substrate contacts are provided by asparagine 605 and tryptophan 1000.

The protein belongs to the glycosyl hydrolase 2 family. Homotetramer. Requires Mg(2+) as cofactor. It depends on Na(+) as a cofactor.

The catalysed reaction is Hydrolysis of terminal non-reducing beta-D-galactose residues in beta-D-galactosides.. The polypeptide is Beta-galactosidase (Escherichia coli O127:H6 (strain E2348/69 / EPEC)).